The chain runs to 286 residues: ATP synthase gamma chain (286 aa).

Belongs to the ATPase gamma chain family. As to quaternary structure, F-type ATPases have 2 components, CF(1) - the catalytic core - and CF(0) - the membrane proton channel. CF(1) has five subunits: alpha(3), beta(3), gamma(1), delta(1), epsilon(1). CF(0) has three main subunits: a, b and c.

The protein localises to the cell inner membrane. In terms of biological role, produces ATP from ADP in the presence of a proton gradient across the membrane. The gamma chain is believed to be important in regulating ATPase activity and the flow of protons through the CF(0) complex. The protein is ATP synthase gamma chain of Teredinibacter turnerae (strain ATCC 39867 / T7901).